The following is a 505-amino-acid chain: ATP synthase subunit alpha (505 aa).

170-177 lines the ATP pocket; that stretch reads GDRQTGKT.

It belongs to the ATPase alpha/beta chains family. F-type ATPases have 2 components, CF(1) - the catalytic core - and CF(0) - the membrane proton channel. CF(1) has five subunits: alpha(3), beta(3), gamma(1), delta(1), epsilon(1). CF(0) has four main subunits: a(1), b(1), b'(1) and c(9-12).

It is found in the cellular thylakoid membrane. It carries out the reaction ATP + H2O + 4 H(+)(in) = ADP + phosphate + 5 H(+)(out). In terms of biological role, produces ATP from ADP in the presence of a proton gradient across the membrane. The alpha chain is a regulatory subunit. This Prochlorococcus marinus (strain MIT 9313) protein is ATP synthase subunit alpha.